Reading from the N-terminus, the 339-residue chain is Glycerol-3-phosphate dehydrogenase [NAD(P)+] (339 aa).

The NADPH site is built by Ser-15, Trp-16, His-36, and Lys-110. Residues Lys-110, Gly-144, and Ser-146 each contribute to the sn-glycerol 3-phosphate site. Ala-148 contacts NADPH. Sn-glycerol 3-phosphate contacts are provided by Lys-199, Asp-252, Ser-262, Arg-263, and Asn-264. The active-site Proton acceptor is Lys-199. Arg-263 provides a ligand contact to NADPH. Residues Val-287 and Glu-289 each coordinate NADPH.

The protein belongs to the NAD-dependent glycerol-3-phosphate dehydrogenase family.

Its subcellular location is the cytoplasm. It carries out the reaction sn-glycerol 3-phosphate + NAD(+) = dihydroxyacetone phosphate + NADH + H(+). It catalyses the reaction sn-glycerol 3-phosphate + NADP(+) = dihydroxyacetone phosphate + NADPH + H(+). It functions in the pathway membrane lipid metabolism; glycerophospholipid metabolism. Catalyzes the reduction of the glycolytic intermediate dihydroxyacetone phosphate (DHAP) to sn-glycerol 3-phosphate (G3P), the key precursor for phospholipid synthesis. This is Glycerol-3-phosphate dehydrogenase [NAD(P)+] from Desulfotalea psychrophila (strain LSv54 / DSM 12343).